The sequence spans 120 residues: uncharacterized protein (120 aa).

The HIT domain occupies 7-120 (VFAKIITKNL…KLIGLINNND (114 aa)). Residues 101 to 105 (HFHFH) carry the Histidine triad motif motif.

This is an uncharacterized protein from Rickettsia prowazekii (strain Madrid E).